The following is a 342-amino-acid chain: Uroporphyrinogen decarboxylase (342 aa).

Residues 24-28, aspartate 74, tyrosine 149, serine 204, and histidine 319 each bind substrate; that span reads RQAGR.

It belongs to the uroporphyrinogen decarboxylase family. Homodimer.

The protein localises to the cytoplasm. The catalysed reaction is uroporphyrinogen III + 4 H(+) = coproporphyrinogen III + 4 CO2. Its pathway is porphyrin-containing compound metabolism; protoporphyrin-IX biosynthesis; coproporphyrinogen-III from 5-aminolevulinate: step 4/4. In terms of biological role, catalyzes the decarboxylation of four acetate groups of uroporphyrinogen-III to yield coproporphyrinogen-III. This is Uroporphyrinogen decarboxylase from Chelativorans sp. (strain BNC1).